The primary structure comprises 129 residues: Thioredoxin H7 (129 aa).

One can recognise a Thioredoxin domain in the interval 6-129 (SSVHDVHSSM…LVKKIEQHRV (124 aa)). Catalysis depends on nucleophile residues Cys-55 and Cys-58. The cysteines at positions 55 and 58 are disulfide-linked.

Belongs to the thioredoxin family. Plant H-type subfamily.

The protein resides in the cytoplasm. In terms of biological role, probable thiol-disulfide oxidoreductase that may be involved in the redox regulation of a number of cytosolic enzymes. This Arabidopsis thaliana (Mouse-ear cress) protein is Thioredoxin H7 (TRX7).